The sequence spans 541 residues: Protein yellow (541 aa).

Positions 1–21 (MFQDKGWILVTLITLVTPSWA) are cleaved as a signal peptide. Residues Asn144 and Asn215 are each glycosylated (N-linked (GlcNAc...) asparagine). The segment at 443-463 (QKPQTSWASSPPPPSRTYLPA) is disordered.

This sequence belongs to the major royal jelly protein family.

The protein localises to the secreted. Functionally, controls the pigmentation pattern of the adult cuticle and larval mouth parts. The polypeptide is Protein yellow (y) (Drosophila melanogaster (Fruit fly)).